A 382-amino-acid polypeptide reads, in one-letter code: Mannitol-1-phosphate 5-dehydrogenase (382 aa).

An NAD(+)-binding site is contributed by Ala3 to Gly14.

Belongs to the mannitol dehydrogenase family.

It catalyses the reaction D-mannitol 1-phosphate + NAD(+) = beta-D-fructose 6-phosphate + NADH + H(+). In Geobacillus stearothermophilus (Bacillus stearothermophilus), this protein is Mannitol-1-phosphate 5-dehydrogenase (mtlD).